A 166-amino-acid chain; its full sequence is Urease accessory protein UreE (166 aa).

The disordered stretch occupies residues 132–156 (FQPEHGAYGGGHHHSRHGDEDFNYP).

The protein belongs to the UreE family.

Its subcellular location is the cytoplasm. Functionally, involved in urease metallocenter assembly. Binds nickel. Probably functions as a nickel donor during metallocenter assembly. The sequence is that of Urease accessory protein UreE from Pseudomonas fluorescens (strain ATCC BAA-477 / NRRL B-23932 / Pf-5).